We begin with the raw amino-acid sequence, 387 residues long: Alpha-2B adrenergic receptor (387 aa).

Residues 1 to 25 (AIAAVITFLILFTIFGNALVILAVL) traverse the membrane as a helical segment. The Cytoplasmic segment spans residues 26-36 (TSRSLRAPQNL). A helical membrane pass occupies residues 37-62 (FLVSLAAADILVATLIIPFSLANELL). The Extracellular segment spans residues 63–72 (GYWYFRHTWC). A disulfide bridge connects residues C72 and C151. The helical transmembrane segment at 73 to 95 (XVYLALDVLFCTSSIVHLCAISL) threads the bilayer. Topologically, residues 96–117 (DRYWAVSRALEYNSKRTPRRIK) are cytoplasmic. A helical transmembrane segment spans residues 118-140 (CIILTVWLIAAAISLPPLIYKGD). Residues 141 to 156 (QDPQPRGRPQCKLNQE) lie on the Extracellular side of the membrane. The chain crosses the membrane as a helical span at residues 157 to 180 (AWYILSSSIGSFFVPCLIMILVYL). The Cytoplasmic segment spans residues 181-351 (RIYLIAKRSS…LTREKRFTFV (171 aa)). The disordered stretch occupies residues 193–303 (RKPRAKGXPR…VPASPALACS (111 aa)). Acidic residues predominate over residues 279–290 (PEEEAEEEEECG). Residues 352 to 375 (LAVVIGVFVLCWFPFFFSYSLGAI) form a helical membrane-spanning segment. At 376-384 (CPQHCKVPH) the chain is on the extracellular side. Residues 385–387 (GLF) form a helical membrane-spanning segment.

Belongs to the G-protein coupled receptor 1 family. Adrenergic receptor subfamily. ADRA2B sub-subfamily. Interacts with RAB26. Interacts with PPP1R9B. Interacts with GGA1, GGA2 and GGA3.

Its subcellular location is the cell membrane. In terms of biological role, alpha-2 adrenergic receptors mediate the catecholamine-induced inhibition of adenylate cyclase through the action of G proteins. This is Alpha-2B adrenergic receptor (ADRA2B) from Macroscelides proboscideus (Short-eared elephant shrew).